The primary structure comprises 313 residues: Hydroxyphenylpyruvate reductase (313 aa).

Residues 152 to 155, 174 to 176, and Ile-230 each bind NADP(+); these read LGRI and SRS. The active site involves Arg-232. An NADP(+)-binding site is contributed by Asp-256. Glu-261 is a catalytic residue. His-279 acts as the Proton donor in catalysis.

This sequence belongs to the D-isomer specific 2-hydroxyacid dehydrogenase family.

It catalyses the reaction (2R)-2-hydroxy-3-(4-hydroxyphenyl)propanoate + NAD(+) = 3-(4-hydroxyphenyl)pyruvate + NADH + H(+). The catalysed reaction is (2R)-2-hydroxy-3-(4-hydroxyphenyl)propanoate + NADP(+) = 3-(4-hydroxyphenyl)pyruvate + NADPH + H(+). It carries out the reaction (2R)-3-(3,4-dihydroxyphenyl)lactate + NADP(+) = 3-(3,4-dihydroxyphenyl)pyruvate + NADPH + H(+). The enzyme catalyses (2R)-3-(3,4-dihydroxyphenyl)lactate + NAD(+) = 3-(3,4-dihydroxyphenyl)pyruvate + NADH + H(+). In terms of biological role, catalyzes the NAD(P)H-dependent reduction of 4-hydroxyphenylpyruvate to 4-hydroxyphenyllactate and 3,4-dihydroxyphenylpyruvate to 3,4-dihydroxyphenyllactate in the biosynthesis of rosmarinic acid. Rosmarinic acid is an ester of caffeic acid and 3,4-dihydroxyphenyllactic acid. NADP is the preferred substrate. This chain is Hydroxyphenylpyruvate reductase (HPPR), found in Plectranthus scutellarioides (Coleus).